The sequence spans 613 residues: Apoptosis-inducing factor 1, mitochondrial (613 aa).

2 consecutive short sequence motifs (mitochondrial localization signal) follow at residues 1–31 (MFRC…PRQR) and 63–89 (KIDN…KTMK). The N-terminal 54 residues, 1–54 (MFRCGGLAAGALKQKLVPLVRTVCVRSPRQRNRLPGNLFQRWHVPLELQMTRQM), are a transit peptide targeting the mitochondrion. Positions 55–101 (ASSGASGGKIDNSVLVLIVGLSTVGAGAYAYKTMKEDEKRYNERISG) are cleaved as a propeptide — removed in mature form. The tract at residues 100 to 127 (SGLGLTPEQKQKKAALSASEGEEVPQDK) is disordered. The residue at position 105 (Thr-105) is a Phosphothreonine. Position 109 is an N6-succinyllysine (Lys-109). A phosphoserine mark is found at Ser-116 and Ser-118. Positions 134-483 (FLLIGGGTAA…KPYWHQSMFW (350 aa)) are FAD-dependent oxidoreductase. Residues 138-142 (GGGTA), 164-165 (ED), Arg-172, and Lys-177 each bind FAD. Trp-196 lines the NAD(+) pocket. Val-233 provides a ligand contact to FAD. Lys-255 is covalently cross-linked (Glycyl lysine isopeptide (Lys-Gly) (interchain with G-Cter in ubiquitin)). At Ser-268 the chain carries Phosphoserine. Arg-285 provides a ligand contact to FAD. Ser-292 is modified (phosphoserine). NAD(+) contacts are provided by residues 308–311 (GGFL), Glu-336, and Lys-342. Ser-371 carries the phosphoserine modification. Lys-388 is subject to N6-acetyllysine. Residue Gly-399 coordinates NAD(+). Asp-438 provides a ligand contact to FAD. A Nuclear localization signal motif is present at residues 446–451 (KLGRRR). Residues 453–454 (EH), Trp-483, and Glu-493 contribute to the NAD(+) site. FAD-binding positions include 454-455 (HH) and Trp-483. Over residues 513–529 (AQDNPKSATEQSGTGIR) the composition is skewed to polar residues. Residues 513-554 (AQDNPKSATEQSGTGIRSESETESEASEITIPPSTPAVPQAP) are disordered. A Phosphothreonine modification is found at Thr-521. Residues Ser-524 and Ser-530 each carry the phosphoserine modification. Asn-583 contributes to the NAD(+) binding site. Position 593 is an N6-acetyllysine (Lys-593).

It belongs to the FAD-dependent oxidoreductase family. As to quaternary structure, monomer (oxidized form). Homodimer (reduced form). Upon reduction with NADH, undergoes dimerization and forms tight, long-lived FADH2-NAD charge transfer complexes (CTC) resistant to oxidation. Also dimerizes with isoform 3 preventing its release from mitochondria. Interacts with XIAP/BIRC4. Interacts (via N-terminus) with EIF3G (via C-terminus). Interacts with PRELID1. Interacts with CHCHD4; the interaction increases in presence of NADH. Interacts with processed form of PARP1 (Poly [ADP-ribose] polymerase 1, processed C-terminus); interaction is mediated with poly-ADP-ribose chains attached to PARP1, promoting translocation into the nucleus. The cofactor is FAD. In terms of processing, under normal conditions, a 54-residue N-terminal segment is first proteolytically removed during or just after translocation into the mitochondrial intermembrane space (IMS) by the mitochondrial processing peptidase (MPP) to form the inner-membrane-anchored mature form (AIFmit). During apoptosis, it is further proteolytically processed at amino-acid position 101 leading to the generation of the mature form, which is confined to the mitochondrial IMS in a soluble form (AIFsol). AIFsol is released to the cytoplasm in response to specific death signals, and translocated to the nucleus, where it induces nuclear apoptosis in a caspase-independent manner. Post-translationally, ubiquitination by XIAP/BIRC4 does not lead to proteasomal degradation. Ubiquitination at Lys-255 by XIAP/BIRC4 blocks its ability to bind DNA and induce chromatin degradation, thereby inhibiting its ability to induce cell death. In terms of tissue distribution, expressed in all tested tissues. Detected in muscle and skin fibroblasts (at protein level). Expressed in osteoblasts (at protein level). As to expression, brain specific. Expressed in all tested tissues except brain. In terms of tissue distribution, isoform 5 is frequently down-regulated in human cancers.

The protein localises to the mitochondrion intermembrane space. Its subcellular location is the mitochondrion inner membrane. It is found in the cytoplasm. It localises to the nucleus. The protein resides in the perinuclear region. The protein localises to the mitochondrion. Its subcellular location is the cytosol. The enzyme catalyses A + NADH + H(+) = AH2 + NAD(+). In terms of biological role, functions both as NADH oxidoreductase and as regulator of apoptosis. In response to apoptotic stimuli, it is released from the mitochondrion intermembrane space into the cytosol and to the nucleus, where it functions as a proapoptotic factor in a caspase-independent pathway. Release into the cytoplasm is mediated upon binding to poly-ADP-ribose chains. The soluble form (AIFsol) found in the nucleus induces 'parthanatos' i.e. caspase-independent fragmentation of chromosomal DNA. Binds to DNA in a sequence-independent manner. Interacts with EIF3G, and thereby inhibits the EIF3 machinery and protein synthesis, and activates caspase-7 to amplify apoptosis. Plays a critical role in caspase-independent, pyknotic cell death in hydrogen peroxide-exposed cells. In contrast, participates in normal mitochondrial metabolism. Plays an important role in the regulation of respiratory chain biogenesis by interacting with CHCHD4 and controlling CHCHD4 mitochondrial import. Functionally, has NADH oxidoreductase activity. Does not induce nuclear apoptosis. Its function is as follows. Pro-apoptotic isoform. The polypeptide is Apoptosis-inducing factor 1, mitochondrial (Homo sapiens (Human)).